The primary structure comprises 648 residues: Serine/arginine repetitive matrix protein 3 (648 aa).

Residues 1 to 44 form a disordered region; that stretch reads MSSTVNNGATGMPAPPDAANGFPQPGASSGSWPRAEEELRAAEP. The CWF21 domain maps to 55–98; it reads LDHERKRRVELKCMELQEMMEEQGYSEEEIRQKVGTFRQMLMEK. The span at 99–109 shows a compositional bias: basic and acidic residues; it reads EGVLTREDRPG. 2 disordered regions span residues 99–139 and 154–648; these read EGVL…DGPV and YRTK…SGGF. Composition is skewed to basic residues over residues 168–186, 199–211, and 219–243; these read PKKK…KKRR, LRKK…KHRR, and RRKR…RKRP. Composition is skewed to low complexity over residues 257-276 and 289-317; these read SASS…GSPS and TGSQ…NGGS. The segment covering 381–409 has biased composition (basic residues); it reads ARRRRRRRRRRRSRSSANAPRRRGRRRTK. Composition is skewed to low complexity over residues 414–428, 461–471, and 493–502; these read RGSS…SSSD, RPASTSPSPGT, and SWSSSRSPSK. Basic and acidic residues predominate over residues 525 to 544; the sequence is LGRDKDSEGRARHAEAEAAR. The span at 545 to 560 shows a compositional bias: basic residues; the sequence is TRRRSRSYSPIRKRRR. A compositionally biased stretch (low complexity) spans 579-648; sequence IPYYRPSPSS…SRSSSESGGF (70 aa).

Belongs to the CWC21 family.

Its function is as follows. May play a role in regulating breast cancer cell invasiveness. May be involved in RYBP-mediated breast cancer progression. The protein is Serine/arginine repetitive matrix protein 3 (Srrm3) of Mus musculus (Mouse).